The sequence spans 96 residues: Co-chaperonin GroES (96 aa).

It belongs to the GroES chaperonin family. Heptamer of 7 subunits arranged in a ring. Interacts with the chaperonin GroEL.

The protein localises to the cytoplasm. Functionally, together with the chaperonin GroEL, plays an essential role in assisting protein folding. The GroEL-GroES system forms a nano-cage that allows encapsulation of the non-native substrate proteins and provides a physical environment optimized to promote and accelerate protein folding. GroES binds to the apical surface of the GroEL ring, thereby capping the opening of the GroEL channel. The protein is Co-chaperonin GroES of Pelagibacter ubique (strain HTCC1062).